Here is a 339-residue protein sequence, read N- to C-terminus: N-acetyl-gamma-glutamyl-phosphate reductase (339 aa).

Cysteine 145 is a catalytic residue.

The protein belongs to the NAGSA dehydrogenase family. Type 1 subfamily.

The protein localises to the cytoplasm. It carries out the reaction N-acetyl-L-glutamate 5-semialdehyde + phosphate + NADP(+) = N-acetyl-L-glutamyl 5-phosphate + NADPH + H(+). Its pathway is amino-acid biosynthesis; L-arginine biosynthesis; N(2)-acetyl-L-ornithine from L-glutamate: step 3/4. In terms of biological role, catalyzes the NADPH-dependent reduction of N-acetyl-5-glutamyl phosphate to yield N-acetyl-L-glutamate 5-semialdehyde. This chain is N-acetyl-gamma-glutamyl-phosphate reductase, found in Thermotoga sp. (strain RQ2).